A 468-amino-acid chain; its full sequence is Aspartate ammonia-lyase (468 aa).

Residues Thr-99, Ser-138, Thr-139, Asn-140, and Thr-185 each coordinate L-aspartate. Positions 315 to 324 (GSSIMPGKVN) are SS loop. Ser-316 serves as the catalytic Proton acceptor. The L-aspartate site is built by Ser-317 and Lys-322.

This sequence belongs to the class-II fumarase/aspartase family. Aspartase subfamily. In terms of assembly, homotetramer.

The catalysed reaction is L-aspartate = fumarate + NH4(+). Functionally, catalyzes the reversible conversion of L-aspartate to fumarate and ammonia. The protein is Aspartate ammonia-lyase (aspA) of Helicobacter pylori (strain J99 / ATCC 700824) (Campylobacter pylori J99).